The following is a 443-amino-acid chain: Cysteine proteinase B (443 aa).

The signal sequence occupies residues 1–27 (MATSRAALCAVAVVCVVLAAACAPARA). Residues 28–125 (IHVGTPAAAL…YRKARADLSA (98 aa)) constitute a propeptide, activation peptide. 2 disulfide bridges follow: Cys-147–Cys-188 and Cys-181–Cys-226. Cys-150 is an active-site residue. N-linked (GlcNAc...) asparagine glycosylation occurs at Asn-228. Cys-281 and Cys-329 are joined by a disulfide. Catalysis depends on residues His-288 and Asn-308.

This sequence belongs to the peptidase C1 family.

The polypeptide is Cysteine proteinase B (LMCPB) (Leishmania mexicana).